The primary structure comprises 250 residues: Kallikrein-14 (250 aa).

The N-terminal stretch at 1–18 (MFLLLIILQALAVAIAQS) is a signal peptide. Positions 19–23 (QGDHK) are cleaved as a propeptide — activation peptide. Residues 24–248 (IIGGYRCVRN…YHSWIQRTMQ (225 aa)) form the Peptidase S1 domain. Cys-51 and Cys-67 are oxidised to a cystine. Residues His-66 and Asp-110 each act as charge relay system in the active site. Cystine bridges form between Cys-142-Cys-209, Cys-174-Cys-188, and Cys-199-Cys-224. The Charge relay system role is filled by Ser-203.

This sequence belongs to the peptidase S1 family. Kallikrein subfamily. Post-translationally, proteolytic cleavage of the activation peptide produces the active enzyme.

The protein resides in the secreted. Its subcellular location is the extracellular space. With respect to regulation, inhibited by SERPINA1, SERPINC1, SERPINE1, SERPINF2, aprotinin, soybean, trypsin inhibitor and leupeptin. Inhibited by serine protease inhibitor SPINK5. Has an autoproteolytic activity which may have a regulatory effect. Activated by citrate and inhibited by zinc and to a lower extent by manganese. Functionally, serine-type endopeptidase with a dual trypsin-like and chymotrypsin-like substrate specificity. May activate/inactivate the proteinase-activated receptors F2R, F2RL1 and F2RL3 and other kallikreins including KLK1, KLK3, KLK5 and KLK11. May function in seminal clot liquefaction through direct cleavage of the semenogelin SEMG1 and SEMG2 and activation of KLK3. May function through desmoglein DSG1 cleavage in epidermal desquamation a process by which the most superficial corneocytes are shed from the skin surface. May be involved in several aspects of tumor progression including growth, invasion and angiogenesis. The protein is Kallikrein-14 (Klk14) of Mus musculus (Mouse).